The following is a 160-amino-acid chain: GTP-dependent dephospho-CoA kinase (160 aa).

Residues Asp-45, Ile-46, Val-47, Asp-59, Lys-61, Glu-108, and Asp-130 each contribute to the GTP site.

The protein belongs to the GTP-dependent DPCK family.

It carries out the reaction 3'-dephospho-CoA + GTP = GDP + CoA + H(+). It participates in cofactor biosynthesis; coenzyme A biosynthesis. In terms of biological role, catalyzes the GTP-dependent phosphorylation of the 3'-hydroxyl group of dephosphocoenzyme A to form coenzyme A (CoA). The chain is GTP-dependent dephospho-CoA kinase from Staphylothermus marinus (strain ATCC 43588 / DSM 3639 / JCM 9404 / F1).